We begin with the raw amino-acid sequence, 145 residues long: Large ribosomal subunit protein uL13 (145 aa).

The protein belongs to the universal ribosomal protein uL13 family. Part of the 50S ribosomal subunit.

Functionally, this protein is one of the early assembly proteins of the 50S ribosomal subunit, although it is not seen to bind rRNA by itself. It is important during the early stages of 50S assembly. This chain is Large ribosomal subunit protein uL13, found in Bacillus cytotoxicus (strain DSM 22905 / CIP 110041 / 391-98 / NVH 391-98).